A 70-amino-acid polypeptide reads, in one-letter code: DNA-directed RNA polymerase subunit omega (70 aa).

Belongs to the RNA polymerase subunit omega family. As to quaternary structure, the RNAP catalytic core consists of 2 alpha, 1 beta, 1 beta' and 1 omega subunit. When a sigma factor is associated with the core the holoenzyme is formed, which can initiate transcription.

The enzyme catalyses RNA(n) + a ribonucleoside 5'-triphosphate = RNA(n+1) + diphosphate. Functionally, promotes RNA polymerase assembly. Latches the N- and C-terminal regions of the beta' subunit thereby facilitating its interaction with the beta and alpha subunits. This is DNA-directed RNA polymerase subunit omega from Methylobacillus flagellatus (strain ATCC 51484 / DSM 6875 / VKM B-1610 / KT).